We begin with the raw amino-acid sequence, 596 residues long: Beta-fructofuranosidase, insoluble isoenzyme 7 (596 aa).

The signal sequence occupies residues Met1–Ser24. Residues Trp51–Asp54, Gln70, and Trp78 contribute to the substrate site. The active site involves Asp54. A glycan (N-linked (GlcNAc...) asparagine) is linked at Asn82. Substrate contacts are provided by residues Trp115–Ser116, Arg179–Asp180, and Glu234. Asn330 carries an N-linked (GlcNAc...) asparagine glycan. A disulfide bridge connects residues Cys432 and Cys478. A glycan (N-linked (GlcNAc...) asparagine) is linked at Asn552.

The protein belongs to the glycosyl hydrolase 32 family.

The protein resides in the secreted. The protein localises to the extracellular space. It is found in the apoplast. It localises to the cell wall. The catalysed reaction is Hydrolysis of terminal non-reducing beta-D-fructofuranoside residues in beta-D-fructofuranosides.. Its function is as follows. May play a role in sucrose partitioning during seed development. The protein is Beta-fructofuranosidase, insoluble isoenzyme 7 (CIN7) of Oryza sativa subsp. indica (Rice).